Consider the following 647-residue polypeptide: Acetyl-coenzyme A synthetase (647 aa).

Residues 189 to 192 (RGGK), threonine 307, and asparagine 331 each bind CoA. Residues 383-385 (GEP), 407-412 (DTWWQT), aspartate 496, and arginine 511 each bind ATP. Serine 519 contacts CoA. Arginine 522 is an ATP binding site. Mg(2+) is bound by residues histidine 535 and valine 538. Arginine 580 provides a ligand contact to CoA. Residue lysine 605 is modified to N6-acetyllysine.

This sequence belongs to the ATP-dependent AMP-binding enzyme family. Mg(2+) is required as a cofactor. Post-translationally, acetylated. Deacetylation by the SIR2-homolog deacetylase activates the enzyme.

It catalyses the reaction acetate + ATP + CoA = acetyl-CoA + AMP + diphosphate. Catalyzes the conversion of acetate into acetyl-CoA (AcCoA), an essential intermediate at the junction of anabolic and catabolic pathways. AcsA undergoes a two-step reaction. In the first half reaction, AcsA combines acetate with ATP to form acetyl-adenylate (AcAMP) intermediate. In the second half reaction, it can then transfer the acetyl group from AcAMP to the sulfhydryl group of CoA, forming the product AcCoA. This is Acetyl-coenzyme A synthetase from Syntrophus aciditrophicus (strain SB).